The following is a 257-amino-acid chain: Imidazole glycerol phosphate synthase subunit HisF (257 aa).

Catalysis depends on residues Asp-11 and Asp-130.

Belongs to the HisA/HisF family. Heterodimer of HisH and HisF.

It is found in the cytoplasm. It catalyses the reaction 5-[(5-phospho-1-deoxy-D-ribulos-1-ylimino)methylamino]-1-(5-phospho-beta-D-ribosyl)imidazole-4-carboxamide + L-glutamine = D-erythro-1-(imidazol-4-yl)glycerol 3-phosphate + 5-amino-1-(5-phospho-beta-D-ribosyl)imidazole-4-carboxamide + L-glutamate + H(+). The protein operates within amino-acid biosynthesis; L-histidine biosynthesis; L-histidine from 5-phospho-alpha-D-ribose 1-diphosphate: step 5/9. In terms of biological role, IGPS catalyzes the conversion of PRFAR and glutamine to IGP, AICAR and glutamate. The HisF subunit catalyzes the cyclization activity that produces IGP and AICAR from PRFAR using the ammonia provided by the HisH subunit. In Prochlorococcus marinus (strain SARG / CCMP1375 / SS120), this protein is Imidazole glycerol phosphate synthase subunit HisF.